Consider the following 70-residue polypeptide: MSAFENFGKRETVSDDRMECGICWHVYDPAEGDPVWQIPPGTPFSNLTEDWRCPNCDALQSKFMRLGDGR.

One can recognise a Rubredoxin-like domain in the interval 15–66 (DDRMECGICWHVYDPAEGDPVWQIPPGTPFSNLTEDWRCPNCDALQSKFMRL). Fe cation contacts are provided by Cys20, Cys23, Cys53, and Cys56.

The protein belongs to the rubredoxin family. It depends on Fe(3+) as a cofactor.

Could be an electron transport intermediate in hydrogen oxidation. The chain is Probable rubredoxin HupI (hupI) from Rhizobium leguminosarum bv. viciae.